The sequence spans 408 residues: Putative agmatinase 3 (408 aa).

The N-terminal stretch at 1–21 (MKSVEWFTWGVFLLLSGFGEA) is a signal peptide. H198, D222, H224, D226, D319, and D321 together coordinate Mn(2+).

It belongs to the arginase family. Mn(2+) serves as cofactor.

It catalyses the reaction agmatine + H2O = urea + putrescine. The protein is Putative agmatinase 3 of Schizosaccharomyces pombe (strain 972 / ATCC 24843) (Fission yeast).